Reading from the N-terminus, the 433-residue chain is Glutamate-1-semialdehyde 2,1-aminomutase (433 aa).

An N6-(pyridoxal phosphate)lysine modification is found at Lys271.

Belongs to the class-III pyridoxal-phosphate-dependent aminotransferase family. HemL subfamily. As to quaternary structure, homodimer. Pyridoxal 5'-phosphate is required as a cofactor.

It localises to the cytoplasm. It carries out the reaction (S)-4-amino-5-oxopentanoate = 5-aminolevulinate. Its pathway is porphyrin-containing compound metabolism; protoporphyrin-IX biosynthesis; 5-aminolevulinate from L-glutamyl-tRNA(Glu): step 2/2. It participates in porphyrin-containing compound metabolism; chlorophyll biosynthesis. This Prochlorococcus marinus subsp. pastoris (strain CCMP1986 / NIES-2087 / MED4) protein is Glutamate-1-semialdehyde 2,1-aminomutase.